The sequence spans 321 residues: Lipoyl synthase (321 aa).

[4Fe-4S] cluster-binding residues include Cys-68, Cys-73, Cys-79, Cys-94, Cys-98, Cys-101, and Ser-308. Residues 80–297 form the Radical SAM core domain; that stretch reads FNHGTATFMI…KEIALELGFT (218 aa).

This sequence belongs to the radical SAM superfamily. Lipoyl synthase family. It depends on [4Fe-4S] cluster as a cofactor.

The protein resides in the cytoplasm. The catalysed reaction is [[Fe-S] cluster scaffold protein carrying a second [4Fe-4S](2+) cluster] + N(6)-octanoyl-L-lysyl-[protein] + 2 oxidized [2Fe-2S]-[ferredoxin] + 2 S-adenosyl-L-methionine + 4 H(+) = [[Fe-S] cluster scaffold protein] + N(6)-[(R)-dihydrolipoyl]-L-lysyl-[protein] + 4 Fe(3+) + 2 hydrogen sulfide + 2 5'-deoxyadenosine + 2 L-methionine + 2 reduced [2Fe-2S]-[ferredoxin]. It functions in the pathway protein modification; protein lipoylation via endogenous pathway; protein N(6)-(lipoyl)lysine from octanoyl-[acyl-carrier-protein]: step 2/2. Functionally, catalyzes the radical-mediated insertion of two sulfur atoms into the C-6 and C-8 positions of the octanoyl moiety bound to the lipoyl domains of lipoate-dependent enzymes, thereby converting the octanoylated domains into lipoylated derivatives. This chain is Lipoyl synthase, found in Vibrio atlanticus (strain LGP32) (Vibrio splendidus (strain Mel32)).